The primary structure comprises 221 residues: Sentrin-specific protease 8 (221 aa).

Met1 is subject to N-acetylmethionine. The segment at 11–174 (SLLRQSDVSL…MYVICNTEAL (164 aa)) is protease. Residues His102 and Asp119 contribute to the active site. The active-site Nucleophile is the Cys163.

Belongs to the peptidase C48 family.

In terms of biological role, protease that catalyzes two essential functions in the NEDD8 pathway: processing of full-length NEDD8 to its mature form and deconjugation of NEDD8 from targeted proteins such as cullins or p53. The chain is Sentrin-specific protease 8 (Senp8) from Mus musculus (Mouse).